A 262-amino-acid chain; its full sequence is MFDRTWHISRFLLEYGADVNIKNRYGSTPLFEAICNCSCKNVKLFLENNADINEVDLDGDATLMKIFNYNCRIHSGLNSVHLRIARIVIPYLKVIGLKNKHVKNVHAYKQNINFFNSVKQLRLISDESDREINRMKNTILRKNKFGNDITMYDILLEKNMNQLVQIIKNPLIKKRCSELILFKRIVKNNIIYIENRYQKIHGANTVIEFYQYEYTDKWMILPQEIKINILCYLDNKELDYIYESSLENNKNNTSDKKYDVCC.

One copy of the ANK repeat lies at tyrosine 25–glutamate 54.

This chain is Putative ankyrin repeat protein FPV243, found in Vertebrata (FPV).